The sequence spans 465 residues: 23S rRNA (uracil(1939)-C(5))-methyltransferase RlmD (465 aa).

Residues methionine 1–alanine 22 form a disordered region. In terms of domain architecture, TRAM spans proline 16–aspartate 80. Residues cysteine 93, cysteine 99, cysteine 102, and cysteine 181 each coordinate [4Fe-4S] cluster. Positions 289, 318, 323, 339, 367, and 388 each coordinate S-adenosyl-L-methionine. The Nucleophile role is filled by cysteine 421.

It belongs to the class I-like SAM-binding methyltransferase superfamily. RNA M5U methyltransferase family. RlmD subfamily.

The enzyme catalyses uridine(1939) in 23S rRNA + S-adenosyl-L-methionine = 5-methyluridine(1939) in 23S rRNA + S-adenosyl-L-homocysteine + H(+). In terms of biological role, catalyzes the formation of 5-methyl-uridine at position 1939 (m5U1939) in 23S rRNA. In Burkholderia lata (strain ATCC 17760 / DSM 23089 / LMG 22485 / NCIMB 9086 / R18194 / 383), this protein is 23S rRNA (uracil(1939)-C(5))-methyltransferase RlmD.